Here is a 698-residue protein sequence, read N- to C-terminus: Elongation factor G (698 aa).

The region spanning Glu-8–Asn-290 is the tr-type G domain. GTP contacts are provided by residues Ala-17–Thr-24, Asp-88–His-92, and Asn-142–Asp-145.

This sequence belongs to the TRAFAC class translation factor GTPase superfamily. Classic translation factor GTPase family. EF-G/EF-2 subfamily.

The protein localises to the cytoplasm. Its function is as follows. Catalyzes the GTP-dependent ribosomal translocation step during translation elongation. During this step, the ribosome changes from the pre-translocational (PRE) to the post-translocational (POST) state as the newly formed A-site-bound peptidyl-tRNA and P-site-bound deacylated tRNA move to the P and E sites, respectively. Catalyzes the coordinated movement of the two tRNA molecules, the mRNA and conformational changes in the ribosome. This is Elongation factor G from Halorhodospira halophila (strain DSM 244 / SL1) (Ectothiorhodospira halophila (strain DSM 244 / SL1)).